A 380-amino-acid chain; its full sequence is L-lactate dehydrogenase (380 aa).

The FMN hydroxy acid dehydrogenase domain occupies methionine 1–arginine 380. Tyrosine 24 is a binding site for substrate. FMN contacts are provided by serine 106 and glutamine 127. Residue tyrosine 129 participates in substrate binding. Threonine 155 contributes to the FMN binding site. Arginine 164 contacts substrate. An FMN-binding site is contributed by lysine 251. The active-site Proton acceptor is histidine 275. Position 278 (arginine 278) interacts with substrate. Residue aspartate 306–arginine 330 participates in FMN binding.

It belongs to the FMN-dependent alpha-hydroxy acid dehydrogenase family. FMN is required as a cofactor.

The protein resides in the cell inner membrane. It carries out the reaction (S)-lactate + A = pyruvate + AH2. Its function is as follows. Catalyzes the conversion of L-lactate to pyruvate. Is coupled to the respiratory chain. This is L-lactate dehydrogenase from Azorhizobium caulinodans (strain ATCC 43989 / DSM 5975 / JCM 20966 / LMG 6465 / NBRC 14845 / NCIMB 13405 / ORS 571).